The following is a 345-amino-acid chain: Methylthioribose-1-phosphate isomerase (345 aa).

Residues 47-49 (RGA), arginine 90, and glutamine 197 contribute to the substrate site. Aspartate 238 serves as the catalytic Proton donor. Substrate is bound at residue 248-249 (NK).

This sequence belongs to the eIF-2B alpha/beta/delta subunits family. MtnA subfamily.

The catalysed reaction is 5-(methylsulfanyl)-alpha-D-ribose 1-phosphate = 5-(methylsulfanyl)-D-ribulose 1-phosphate. The protein operates within amino-acid biosynthesis; L-methionine biosynthesis via salvage pathway; L-methionine from S-methyl-5-thio-alpha-D-ribose 1-phosphate: step 1/6. Functionally, catalyzes the interconversion of methylthioribose-1-phosphate (MTR-1-P) into methylthioribulose-1-phosphate (MTRu-1-P). In Caldanaerobacter subterraneus subsp. tengcongensis (strain DSM 15242 / JCM 11007 / NBRC 100824 / MB4) (Thermoanaerobacter tengcongensis), this protein is Methylthioribose-1-phosphate isomerase.